Reading from the N-terminus, the 353-residue chain is Protein RecA (353 aa).

67–74 (GPESSGKT) provides a ligand contact to ATP.

This sequence belongs to the RecA family.

It localises to the cytoplasm. In terms of biological role, can catalyze the hydrolysis of ATP in the presence of single-stranded DNA, the ATP-dependent uptake of single-stranded DNA by duplex DNA, and the ATP-dependent hybridization of homologous single-stranded DNAs. It interacts with LexA causing its activation and leading to its autocatalytic cleavage. The polypeptide is Protein RecA (Shewanella loihica (strain ATCC BAA-1088 / PV-4)).